We begin with the raw amino-acid sequence, 550 residues long: Glutamine--tRNA ligase (550 aa).

The 'HIGH' region motif lies at 34-44 (PEPNGYLHLGH). ATP contacts are provided by residues 35–37 (EPN) and 41–47 (HLGHAKS). L-glutamine is bound by residues aspartate 67 and tyrosine 212. ATP is bound by residues threonine 231, 261-262 (RL), and 269-271 (LSK). A 'KMSKS' region motif is present at residues 268-272 (VLSKR).

It belongs to the class-I aminoacyl-tRNA synthetase family. In terms of assembly, monomer.

The protein localises to the cytoplasm. The enzyme catalyses tRNA(Gln) + L-glutamine + ATP = L-glutaminyl-tRNA(Gln) + AMP + diphosphate. This chain is Glutamine--tRNA ligase, found in Buchnera aphidicola subsp. Baizongia pistaciae (strain Bp).